The following is a 192-amino-acid chain: MKRLEVSNQAKLPTQFGEFCIQCFREKGSNGSKEHLVVFTPNFSQNPLVRLHSECLTGDALGSQKCDCGGALQIALERISKEGGLVIYLRQEGRGIGLFNKVNAYALQDKGYDTIQANEMIGFKDDERDYSIAGEILEYYGIKKMRLLTNNPKKIAALEKYAEVTRESLIVCANEHNQGYLEVKKLKMGHLL.

Position 50–54 (50–54 (RLHSE)) interacts with GTP. Zn(2+) is bound by residues Cys-55, Cys-66, and Cys-68. GTP contacts are provided by residues 92–94 (EGR) and Thr-114. The active-site Proton acceptor is the Asp-126. The active-site Nucleophile is Arg-128. The GTP site is built by Thr-149 and Lys-154.

Belongs to the GTP cyclohydrolase II family. Zn(2+) serves as cofactor.

It catalyses the reaction GTP + 4 H2O = 2,5-diamino-6-hydroxy-4-(5-phosphoribosylamino)-pyrimidine + formate + 2 phosphate + 3 H(+). Its pathway is cofactor biosynthesis; riboflavin biosynthesis; 5-amino-6-(D-ribitylamino)uracil from GTP: step 1/4. Functionally, catalyzes the conversion of GTP to 2,5-diamino-6-ribosylamino-4(3H)-pyrimidinone 5'-phosphate (DARP), formate and pyrophosphate. This chain is GTP cyclohydrolase-2, found in Helicobacter pylori (strain Shi470).